The following is a 66-amino-acid chain: DNA gyrase inhibitor YacG (66 aa).

Positions 10, 13, 29, and 33 each coordinate Zn(2+).

This sequence belongs to the DNA gyrase inhibitor YacG family. As to quaternary structure, interacts with GyrB. The cofactor is Zn(2+).

Inhibits all the catalytic activities of DNA gyrase by preventing its interaction with DNA. Acts by binding directly to the C-terminal domain of GyrB, which probably disrupts DNA binding by the gyrase. The protein is DNA gyrase inhibitor YacG of Edwardsiella ictaluri (strain 93-146).